We begin with the raw amino-acid sequence, 264 residues long: 3-methyl-2-oxobutanoate hydroxymethyltransferase (264 aa).

Positions 45 and 84 each coordinate Mg(2+). 3-methyl-2-oxobutanoate-binding positions include 45–46 (DS), D84, and K112. E114 contributes to the Mg(2+) binding site. Residue E181 is the Proton acceptor of the active site.

It belongs to the PanB family. In terms of assembly, homodecamer; pentamer of dimers. Mg(2+) is required as a cofactor.

The protein resides in the cytoplasm. The enzyme catalyses 3-methyl-2-oxobutanoate + (6R)-5,10-methylene-5,6,7,8-tetrahydrofolate + H2O = 2-dehydropantoate + (6S)-5,6,7,8-tetrahydrofolate. The protein operates within cofactor biosynthesis; (R)-pantothenate biosynthesis; (R)-pantoate from 3-methyl-2-oxobutanoate: step 1/2. Catalyzes the reversible reaction in which hydroxymethyl group from 5,10-methylenetetrahydrofolate is transferred onto alpha-ketoisovalerate to form ketopantoate. In Aeromonas salmonicida (strain A449), this protein is 3-methyl-2-oxobutanoate hydroxymethyltransferase.